The following is a 299-amino-acid chain: Bifunctional protein FolD (299 aa).

NADP(+) contacts are provided by residues 168–170, Ser-193, and Ile-234; that span reads GRS.

Belongs to the tetrahydrofolate dehydrogenase/cyclohydrolase family. In terms of assembly, homodimer.

It catalyses the reaction (6R)-5,10-methylene-5,6,7,8-tetrahydrofolate + NADP(+) = (6R)-5,10-methenyltetrahydrofolate + NADPH. It carries out the reaction (6R)-5,10-methenyltetrahydrofolate + H2O = (6R)-10-formyltetrahydrofolate + H(+). Its pathway is one-carbon metabolism; tetrahydrofolate interconversion. Functionally, catalyzes the oxidation of 5,10-methylenetetrahydrofolate to 5,10-methenyltetrahydrofolate and then the hydrolysis of 5,10-methenyltetrahydrofolate to 10-formyltetrahydrofolate. The protein is Bifunctional protein FolD of Bartonella tribocorum (strain CIP 105476 / IBS 506).